We begin with the raw amino-acid sequence, 762 residues long: 5-methyltetrahydropteroyltriglutamate--homocysteine methyltransferase (762 aa).

5-methyltetrahydropteroyltri-L-glutamate-binding positions include 17-20 (REWK) and K111. L-homocysteine is bound by residues 435–437 (IGS) and E488. Residues 435–437 (IGS) and E488 contribute to the L-methionine site. 5-methyltetrahydropteroyltri-L-glutamate-binding positions include 519-520 (RC) and W565. Position 603 (D603) interacts with L-homocysteine. Residue D603 participates in L-methionine binding. E609 contributes to the 5-methyltetrahydropteroyltri-L-glutamate binding site. Zn(2+) contacts are provided by H645, C647, and E669. H698 (proton donor) is an active-site residue. Residue C730 participates in Zn(2+) binding.

The protein belongs to the vitamin-B12 independent methionine synthase family. Requires Zn(2+) as cofactor.

It carries out the reaction 5-methyltetrahydropteroyltri-L-glutamate + L-homocysteine = tetrahydropteroyltri-L-glutamate + L-methionine. It participates in amino-acid biosynthesis; L-methionine biosynthesis via de novo pathway; L-methionine from L-homocysteine (MetE route): step 1/1. Functionally, catalyzes the transfer of a methyl group from 5-methyltetrahydrofolate to homocysteine resulting in methionine formation. This chain is 5-methyltetrahydropteroyltriglutamate--homocysteine methyltransferase, found in Bacillus cereus (strain AH187).